The primary structure comprises 284 residues: Ribosomal RNA small subunit methyltransferase A (284 aa).

His-23, Leu-25, Gly-50, Glu-71, Asp-92, and Asn-121 together coordinate S-adenosyl-L-methionine.

It belongs to the class I-like SAM-binding methyltransferase superfamily. rRNA adenine N(6)-methyltransferase family. RsmA subfamily.

The protein resides in the cytoplasm. It catalyses the reaction adenosine(1518)/adenosine(1519) in 16S rRNA + 4 S-adenosyl-L-methionine = N(6)-dimethyladenosine(1518)/N(6)-dimethyladenosine(1519) in 16S rRNA + 4 S-adenosyl-L-homocysteine + 4 H(+). Specifically dimethylates two adjacent adenosines (A1518 and A1519) in the loop of a conserved hairpin near the 3'-end of 16S rRNA in the 30S particle. May play a critical role in biogenesis of 30S subunits. This is Ribosomal RNA small subunit methyltransferase A from Verminephrobacter eiseniae (strain EF01-2).